We begin with the raw amino-acid sequence, 119 residues long: Ribonuclease P protein component (119 aa).

The protein belongs to the RnpA family. Consists of a catalytic RNA component (M1 or rnpB) and a protein subunit.

It carries out the reaction Endonucleolytic cleavage of RNA, removing 5'-extranucleotides from tRNA precursor.. Functionally, RNaseP catalyzes the removal of the 5'-leader sequence from pre-tRNA to produce the mature 5'-terminus. It can also cleave other RNA substrates such as 4.5S RNA. The protein component plays an auxiliary but essential role in vivo by binding to the 5'-leader sequence and broadening the substrate specificity of the ribozyme. The sequence is that of Ribonuclease P protein component from Erwinia tasmaniensis (strain DSM 17950 / CFBP 7177 / CIP 109463 / NCPPB 4357 / Et1/99).